The primary structure comprises 2206 residues: Genome polyprotein (2206 aa).

The N-myristoyl glycine; by host moiety is linked to residue Gly2. The Cytoplasmic portion of the chain corresponds to Gly2 to Gln1517. 2 amphipathic alpha-helix regions span residues Gly579–Gln599 and Gly579–Leu603. Active-site for protease 2A activity residues include His898 and Asp916. Positions 933 and 935 each coordinate Zn(2+). Cys987 functions as the For protease 2A activity in the catalytic mechanism. Positions 993 and 995 each coordinate Zn(2+). The tract at residues Gly1125–Gln1197 is membrane-binding. Residues Gly1125–Thr1263 form an oligomerization region. The RNA-binding stretch occupies residues Ser1146–Ser1150. An SF3 helicase domain is found at Glu1229–Asn1385. Residue Gly1253–Ser1260 coordinates ATP. Zn(2+) contacts are provided by Cys1393, Cys1396, Cys1405, and Cys1410. The C4-type zinc finger occupies Cys1393 to Cys1410. The RNA-binding stretch occupies residues Glu1437 to Ile1444. The tract at residues Met1448 to Gln1453 is oligomerization. Residues Ala1518–Tyr1533 lie within the membrane without spanning it. Residues Lys1534 to Phe2206 lie on the Cytoplasmic side of the membrane. An O-(5'-phospho-RNA)-tyrosine modification is found at Tyr1543. Residues Gly1563–Phe1741 enclose the Peptidase C3 domain. Residues His1602, Glu1633, and Cys1709 each act as for protease 3C activity in the active site. The RdRp catalytic domain occupies Glu1972–Leu2087. Mg(2+) is bound by residues Asp1978 and Asp2073.

The protein belongs to the picornaviruses polyprotein family. Interacts with capsid protein VP1 and capsid protein VP3 to form heterotrimeric protomers. As to quaternary structure, interacts with capsid protein VP0, and capsid protein VP3 to form heterotrimeric protomers. Interacts with human PVR. Five protomers subsequently associate to form pentamers which serve as building blocks for the capsid. Interacts with capsid protein VP2, capsid protein VP3 and capsid protein VP4 following cleavage of capsid protein VP0. In terms of assembly, interacts with capsid protein VP1 and capsid protein VP3 in the mature capsid. Interacts with capsid protein VP0 and capsid protein VP1 to form heterotrimeric protomers. Five protomers subsequently associate to form pentamers which serve as building blocks for the capsid. Interacts with capsid protein VP4 in the mature capsid. Interacts with protein 2C; this interaction may be important for virion morphogenesis. As to quaternary structure, interacts with capsid protein VP1 and capsid protein VP3. In terms of assembly, homodimer. Homohexamer; forms a hexameric ring structure with 6-fold symmetry characteristic of AAA+ ATPases. Interacts (via N-terminus) with host RTN3 (via reticulon domain); this interaction is important for viral replication. Interacts with capsid protein VP3; this interaction may be important for virion morphogenesis. As to quaternary structure, interacts with protein 3CD. In terms of assembly, homodimer. Interacts with host GBF1. Interacts (via GOLD domain) with host ACBD3 (via GOLD domain); this interaction allows the formation of a viral protein 3A/ACBD3 heterotetramer with a 2:2 stoichiometry, which will stimulate the recruitment of host PI4KB in order to synthesize PI4P at the viral RNA replication sites. Interacts with RNA-directed RNA polymerase. As to quaternary structure, interacts with protein 3AB and with RNA-directed RNA polymerase. In terms of assembly, interacts with Viral protein genome-linked and with protein 3CD. It depends on Mg(2+) as a cofactor. Post-translationally, specific enzymatic cleavages in vivo by the viral proteases yield processing intermediates and the mature proteins. Myristoylation is required for the formation of pentamers during virus assembly. Further assembly of 12 pentamers and a molecule of genomic RNA generates the provirion. In terms of processing, during virion maturation, immature virions are rendered infectious following cleavage of VP0 into VP4 and VP2. This maturation seems to be an autocatalytic event triggered by the presence of RNA in the capsid and it is followed by a conformational change infectious virion. Post-translationally, myristoylation is required during RNA encapsidation and formation of the mature virus particle. VPg is uridylylated by the polymerase into VPg-pUpU. This acts as a nucleotide-peptide primer for the genomic RNA replication.

It localises to the virion. The protein resides in the host cytoplasm. Its subcellular location is the host cytoplasmic vesicle membrane. The protein localises to the host nucleus. The enzyme catalyses a ribonucleoside 5'-triphosphate + H2O = a ribonucleoside 5'-diphosphate + phosphate + H(+). The catalysed reaction is Selective cleavage of Tyr-|-Gly bond in the picornavirus polyprotein.. It carries out the reaction RNA(n) + a ribonucleoside 5'-triphosphate = RNA(n+1) + diphosphate. It catalyses the reaction Selective cleavage of Gln-|-Gly bond in the poliovirus polyprotein. In other picornavirus reactions Glu may be substituted for Gln, and Ser or Thr for Gly.. With respect to regulation, replication or transcription is subject to high level of random mutations by the nucleotide analog ribavirin. In terms of biological role, forms an icosahedral capsid of pseudo T=3 symmetry with capsid proteins VP2 and VP3. The capsid is 300 Angstroms in diameter, composed of 60 copies of each capsid protein and enclosing the viral positive strand RNA genome. Capsid protein VP1 mainly forms the vertices of the capsid. Capsid protein VP1 interacts with host cell receptor PVR to provide virion attachment to target host cells. This attachment induces virion internalization predominantly through clathrin- and caveolin-independent endocytosis in Hela cells and through caveolin-mediated endocytosis in brain microvascular endothelial cells. Tyrosine kinases are probably involved in the entry process. Virus binding to PVR induces increased junctional permeability and rearrangement of junctional proteins. Modulation of endothelial tight junctions, as well as cytolytic infection of endothelial cells themselves, may result in loss of endothelial integrity which may help the virus to reach the CNS. After binding to its receptor, the capsid undergoes conformational changes. Capsid protein VP1 N-terminus (that contains an amphipathic alpha-helix) and capsid protein VP4 are externalized. Together, they shape a pore in the host membrane through which viral genome is translocated to host cell cytoplasm. Forms an icosahedral capsid of pseudo T=3 symmetry with capsid proteins VP2 and VP3. The capsid is 300 Angstroms in diameter, composed of 60 copies of each capsid protein and enclosing the viral positive strand RNA genome. Functionally, lies on the inner surface of the capsid shell. After binding to the host receptor, the capsid undergoes conformational changes. Capsid protein VP4 is released, Capsid protein VP1 N-terminus is externalized, and together, they shape a pore in the host membrane through which the viral genome is translocated into the host cell cytoplasm. Its function is as follows. Component of immature procapsids, which is cleaved into capsid proteins VP4 and VP2 after maturation. Allows the capsid to remain inactive before the maturation step. In terms of biological role, cysteine protease that cleaves viral polyprotein and specific host proteins. It is responsible for the autocatalytic cleavage between the P1 and P2 regions, which is the first cleavage occurring in the polyprotein. Also cleaves the host translation initiation factor EIF4G1, in order to shut down the capped cellular mRNA translation. Inhibits the host nucleus-cytoplasm protein and RNA trafficking by cleaving host members of the nuclear pores including NUP98, NUP62 and NUP153. Counteracts stress granule formation probably by antagonizing its assembly or promoting its dissassembly. Cleaves and inhibits host IFIH1/MDA5, thereby inhibiting the type-I IFN production and the establishment of the antiviral state. Cleaves and inhibits host MAVS, thereby inhibiting the type-I IFN production and the establishment of the antiviral state. Plays an essential role in the virus replication cycle by acting as a viroporin. Creates a pore in the host endoplasmic reticulum and as a consequence releases Ca2+ in the cytoplasm of infected cell. In turn, high levels of cytoplasmic calcium may trigger membrane trafficking and transport of viral ER-associated proteins to viroplasms, sites of viral genome replication. Functionally, induces and associates with structural rearrangements of intracellular membranes. Displays RNA-binding, nucleotide binding and NTPase activities. May play a role in virion morphogenesis and viral RNA encapsidation by interacting with the capsid protein VP3. Its function is as follows. Localizes the viral replication complex to the surface of membranous vesicles. Together with protein 3CD binds the Cis-Active RNA Element (CRE) which is involved in RNA synthesis initiation. Acts as a cofactor to stimulate the activity of 3D polymerase, maybe through a nucleid acid chaperone activity. In terms of biological role, localizes the viral replication complex to the surface of membranous vesicles. It inhibits host cell endoplasmic reticulum-to-Golgi apparatus transport and causes the disassembly of the Golgi complex, possibly through GBF1 interaction. This would result in depletion of MHC, trail receptors and IFN receptors at the host cell surface. Plays an essential role in viral RNA replication by recruiting ACBD3 and PI4KB at the viral replication sites, thereby allowing the formation of the rearranged membranous structures where viral replication takes place. Acts as a primer for viral RNA replication and remains covalently bound to viral genomic RNA. VPg is uridylylated prior to priming replication into VPg-pUpU. The oriI viral genomic sequence may act as a template for this. The VPg-pUpU is then used as primer on the genomic RNA poly(A) by the RNA-dependent RNA polymerase to replicate the viral genome. During genome replication, the VPg-RNA linkage is removed by the host TDP2, thereby accelerating replication. During the late stage of the replication cycle, host TDP2 is excluded from sites of viral RNA synthesis and encapsidation, allowing for the generation of progeny virions. Functionally, involved in the viral replication complex and viral polypeptide maturation. It exhibits protease activity with a specificity and catalytic efficiency that is different from protease 3C. Protein 3CD lacks polymerase activity. Protein 3CD binds to the 5'UTR of the viral genome. Its function is as follows. Major viral protease that mediates proteolytic processing of the polyprotein. Cleaves host EIF5B, contributing to host translation shutoff. Also cleaves host PABPC1, contributing to host translation shutoff. Cleaves host RIGI and thus contributes to the inhibition of type I interferon production. Cleaves host NLRP1, triggers host N-glycine-mediated degradation of the autoinhibitory NLRP1 N-terminal fragment. Inhibits the integrated stress response (ISR) in the infected cell by cleaving host G3BP1. Stress granule formation is thus inhibited, which allows protein synthesis and viral replication. In terms of biological role, replicates the viral genomic RNA on the surface of intracellular membranes. May form linear arrays of subunits that propagate along a strong head-to-tail interaction called interface-I. Covalently attaches UMP to a tyrosine of VPg, which is used to prime RNA synthesis. The positive stranded RNA genome is first replicated at virus induced membranous vesicles, creating a dsRNA genomic replication form. This dsRNA is then used as template to synthesize positive stranded RNA genomes. ss(+)RNA genomes are either translated, replicated or encapsidated. The protein is Genome polyprotein of Poliovirus type 3 (strains P3/Leon/37 and P3/Leon 12A[1]B).